Here is a 237-residue protein sequence, read N- to C-terminus: Methylosome subunit pICln (237 aa).

Ser2 carries the N-acetylserine modification. 4 positions are modified to phosphoserine: Ser102, Ser144, Ser193, and Ser195. The residue at position 223 (Thr223) is a Phosphothreonine.

The protein belongs to the pICln (TC 1.A.47) family. As to quaternary structure, component of the methylosome, a 20S complex containing at least PRMT5/SKB1, WDR77/MEP50 and CLNS1A/pICln. May mediate SNRPD1 and SNRPD3 methylation. Forms a 6S pICln-Sm complex composed of CLNS1A/pICln, SNRPD1, SNRPD2, SNRPE, SNRPF and SNRPG; ring-like structure where CLNS1A/pICln mimics additional Sm proteins and which is unable to assemble into the core snRNP. Interacts with LSM10 and LSM11.

It localises to the cytoplasm. The protein localises to the cytosol. Its subcellular location is the nucleus. It is found in the cytoskeleton. Functionally, involved in both the assembly of spliceosomal snRNPs and the methylation of Sm proteins. Chaperone that regulates the assembly of spliceosomal U1, U2, U4 and U5 small nuclear ribonucleoproteins (snRNPs), the building blocks of the spliceosome, and thereby plays an important role in the splicing of cellular pre-mRNAs. Most spliceosomal snRNPs contain a common set of Sm proteins SNRPB, SNRPD1, SNRPD2, SNRPD3, SNRPE, SNRPF and SNRPG that assemble in a heptameric protein ring on the Sm site of the small nuclear RNA to form the core snRNP (Sm core). In the cytosol, the Sm proteins SNRPD1, SNRPD2, SNRPE, SNRPF and SNRPG are trapped in an inactive 6S pICln-Sm complex by the chaperone CLNS1A that controls the assembly of the core snRNP. Dissociation by the SMN complex of CLNS1A from the trapped Sm proteins and their transfer to an SMN-Sm complex triggers the assembly of core snRNPs and their transport to the nucleus. In Pongo abelii (Sumatran orangutan), this protein is Methylosome subunit pICln (CLNS1A).